We begin with the raw amino-acid sequence, 426 residues long: Histidine--tRNA ligase (426 aa).

It belongs to the class-II aminoacyl-tRNA synthetase family. In terms of assembly, homodimer.

The protein resides in the cytoplasm. The catalysed reaction is tRNA(His) + L-histidine + ATP = L-histidyl-tRNA(His) + AMP + diphosphate + H(+). The chain is Histidine--tRNA ligase from Prochlorococcus marinus (strain MIT 9301).